Here is a 121-residue protein sequence, read N- to C-terminus: Large ribosomal subunit protein uL22 (121 aa).

It belongs to the universal ribosomal protein uL22 family. Part of the 50S ribosomal subunit.

In terms of biological role, this protein binds specifically to 23S rRNA; its binding is stimulated by other ribosomal proteins, e.g. L4, L17, and L20. It is important during the early stages of 50S assembly. It makes multiple contacts with different domains of the 23S rRNA in the assembled 50S subunit and ribosome. The globular domain of the protein is located near the polypeptide exit tunnel on the outside of the subunit, while an extended beta-hairpin is found that lines the wall of the exit tunnel in the center of the 70S ribosome. This chain is Large ribosomal subunit protein uL22, found in Rickettsia massiliae (strain Mtu5).